The sequence spans 154 residues: Myoglobin (154 aa).

The Globin domain occupies 2-148; that stretch reads GLSDGEWQLV…FRNDIAAKYK (147 aa). At serine 4 the chain carries Phosphoserine. Histidine 65 is a binding site for nitrite. Position 65 (histidine 65) interacts with O2. A Phosphothreonine modification is found at threonine 68. Heme b is bound at residue histidine 94.

Belongs to the globin family. As to quaternary structure, monomeric.

The protein resides in the cytoplasm. It is found in the sarcoplasm. The catalysed reaction is Fe(III)-heme b-[protein] + nitric oxide + H2O = Fe(II)-heme b-[protein] + nitrite + 2 H(+). The enzyme catalyses H2O2 + AH2 = A + 2 H2O. Monomeric heme protein which primary function is to store oxygen and facilitate its diffusion within muscle tissues. Reversibly binds oxygen through a pentacoordinated heme iron and enables its timely and efficient release as needed during periods of heightened demand. Depending on the oxidative conditions of tissues and cells, and in addition to its ability to bind oxygen, it also has a nitrite reductase activity whereby it regulates the production of bioactive nitric oxide. Under stress conditions, like hypoxia and anoxia, it also protects cells against reactive oxygen species thanks to its pseudoperoxidase activity. This is Myoglobin (MB) from Spalax ehrenbergi (Middle East blind mole rat).